Consider the following 299-residue polypeptide: MKPDAHHVKQFLLRLQDDICQKLSAVDGANFVEDSWRREAGGGGRSRVLRNGGIFEQAGVNFSHVHGDAMPASATAHRPELAGRSFEAMGVSLVVHPHNPYIPTSHANVRFFIAEKPGADPVWWFGGGFDLTPYYGFEEDAVHWHRTARDLCQPFGDDVYPRYKKWCDDYFFLKHRNEQRGIGGLFFDDLNTPDFDHCFAFMQAVGNGYTEAYLPIVERRKAMVWGERERNFQLYRRGRYVEFNLVWDRGTLFGLQTGGRTESILMSMPPLVRWEYDWQPEAGSPEAALSEFIQVRDWI.

A substrate-binding site is contributed by serine 92. A divalent metal cation-binding residues include histidine 96 and histidine 106. Histidine 106 (proton donor) is an active-site residue. 108–110 is a substrate binding site; that stretch reads NVR. A divalent metal cation contacts are provided by histidine 145 and histidine 175. An important for dimerization region spans residues 240-275; it reads YVEFNLVWDRGTLFGLQTGGRTESILMSMPPLVRWE. 258–260 serves as a coordination point for substrate; sequence GGR.

Belongs to the aerobic coproporphyrinogen-III oxidase family. In terms of assembly, homodimer. A divalent metal cation is required as a cofactor.

The protein localises to the cytoplasm. It carries out the reaction coproporphyrinogen III + O2 + 2 H(+) = protoporphyrinogen IX + 2 CO2 + 2 H2O. The protein operates within porphyrin-containing compound metabolism; protoporphyrin-IX biosynthesis; protoporphyrinogen-IX from coproporphyrinogen-III (O2 route): step 1/1. Involved in the heme biosynthesis. Catalyzes the aerobic oxidative decarboxylation of propionate groups of rings A and B of coproporphyrinogen-III to yield the vinyl groups in protoporphyrinogen-IX. The sequence is that of Oxygen-dependent coproporphyrinogen-III oxidase from Salmonella dublin (strain CT_02021853).